Reading from the N-terminus, the 350-residue chain is Flap endonuclease 1 (350 aa).

Positions M1–R102 are N-domain. The Mg(2+) site is built by D31, D84, E156, E158, D177, D179, and D240. Residues A120 to K262 form an I-domain region. An interaction with PCNA region spans residues K341–F349.

This sequence belongs to the XPG/RAD2 endonuclease family. FEN1 subfamily. As to quaternary structure, interacts with PCNA. PCNA stimulates the nuclease activity without altering cleavage specificity. Requires Mg(2+) as cofactor.

Its function is as follows. Structure-specific nuclease with 5'-flap endonuclease and 5'-3' exonuclease activities involved in DNA replication and repair. During DNA replication, cleaves the 5'-overhanging flap structure that is generated by displacement synthesis when DNA polymerase encounters the 5'-end of a downstream Okazaki fragment. Binds the unpaired 3'-DNA end and kinks the DNA to facilitate 5' cleavage specificity. Cleaves one nucleotide into the double-stranded DNA from the junction in flap DNA, leaving a nick for ligation. Also involved in the base excision repair (BER) pathway. Acts as a genome stabilization factor that prevents flaps from equilibrating into structures that lead to duplications and deletions. Also possesses 5'-3' exonuclease activity on nicked or gapped double-stranded DNA. This chain is Flap endonuclease 1, found in Staphylothermus marinus (strain ATCC 43588 / DSM 3639 / JCM 9404 / F1).